The sequence spans 149 residues: D-aminoacyl-tRNA deacylase (149 aa).

Residues 137 to 138 (GP) carry the Gly-cisPro motif, important for rejection of L-amino acids motif.

The protein belongs to the DTD family. As to quaternary structure, homodimer.

It localises to the cytoplasm. It catalyses the reaction glycyl-tRNA(Ala) + H2O = tRNA(Ala) + glycine + H(+). The enzyme catalyses a D-aminoacyl-tRNA + H2O = a tRNA + a D-alpha-amino acid + H(+). Functionally, an aminoacyl-tRNA editing enzyme that deacylates mischarged D-aminoacyl-tRNAs. Also deacylates mischarged glycyl-tRNA(Ala), protecting cells against glycine mischarging by AlaRS. Acts via tRNA-based rather than protein-based catalysis; rejects L-amino acids rather than detecting D-amino acids in the active site. By recycling D-aminoacyl-tRNA to D-amino acids and free tRNA molecules, this enzyme counteracts the toxicity associated with the formation of D-aminoacyl-tRNA entities in vivo and helps enforce protein L-homochirality. This is D-aminoacyl-tRNA deacylase from Desulfitobacterium hafniense (strain DSM 10664 / DCB-2).